Reading from the N-terminus, the 233-residue chain is Serine-rich 25 kDa antigen protein (233 aa).

The segment at 35 to 219 is disordered; sequence KNEASPEKLE…DNNNLDAASS (185 aa). A compositionally biased stretch (basic and acidic residues) spans 38–53; the sequence is ASPEKLEEAEEKEKSS. Positions 61–71 are enriched in acidic residues; the sequence is SNEDNEDDEDE. Tandem repeats lie at residues 82–93, 102–113, 114–125, 126–137, 138–149, 150–161, 162–169, 170–177, 178–185, and 186–193. Positions 82–161 are 6 X 12 AA tandem repeats of S-S-S-D-K-P-D-N-K-P-E-A; it reads SSSDKPDNKP…SDKPDNKPEA (80 aa). Positions 83-159 are enriched in basic and acidic residues; sequence SSDKPDNKPE…SSSDKPDNKP (77 aa). Residues 160 to 192 show a composition bias toward polar residues; it reads EASSTNKPEASSTNKPEASSTNKPEASSTNKPE. The 4 X 8 AA tandem repeats of S-S-T-N-K-P-E-A stretch occupies residues 162 to 193; the sequence is SSTNKPEASSTNKPEASSTNKPEASSTNKPEA. A compositionally biased stretch (low complexity) spans 193–219; that stretch reads ASSTSNSNDKSGSSSDNDNNNLDAASS.

Phosphorylated on serine residue(s). In terms of processing, O-glycosylated; glycans consist of single N-acetylglucosamine residues. Post-translationally, O-acylated; acyl group is probably palmitate, not myristate.

It is found in the cell membrane. In terms of biological role, plays a role in the adhesion to host cells. Involved in the adhesion to host apoptotic cells thereby facilitating their phagocytosis. The protein is Serine-rich 25 kDa antigen protein of Entamoeba histolytica (strain ATCC 30459 / HM-1:IMSS / ABRM).